The chain runs to 2289 residues: Protein Ycf2 (2289 aa).

1643-1650 serves as a coordination point for ATP; the sequence is GSIGTGRS.

Belongs to the Ycf2 family.

Its subcellular location is the plastid. It localises to the chloroplast stroma. Functionally, probable ATPase of unknown function. Its presence in a non-photosynthetic plant (Epifagus virginiana) and experiments in tobacco indicate that it has an essential function which is probably not related to photosynthesis. This chain is Protein Ycf2, found in Capsella bursa-pastoris (Shepherd's purse).